Here is a 1153-residue protein sequence, read N- to C-terminus: Error-prone DNA polymerase (1153 aa).

Positions 1107–1153 (DELIAPSASTEREAPLNDDRRDHPDLPAQQIRHPRNVRILPPSRDFH) are disordered. Positions 1116 to 1131 (TEREAPLNDDRRDHPD) are enriched in basic and acidic residues.

It belongs to the DNA polymerase type-C family. DnaE2 subfamily.

It localises to the cytoplasm. It carries out the reaction DNA(n) + a 2'-deoxyribonucleoside 5'-triphosphate = DNA(n+1) + diphosphate. Its function is as follows. DNA polymerase involved in damage-induced mutagenesis and translesion synthesis (TLS). It is not the major replicative DNA polymerase. The chain is Error-prone DNA polymerase from Rhodopseudomonas palustris (strain BisA53).